Consider the following 254-residue polypeptide: Proline-rich protein 23A3 (254 aa).

3 disordered regions span residues 1 to 50 (MLRT…LEAP), 161 to 196 (ASPPDDQANGNFSSIPGVPSPLSQDQVPGPSTGAEQ), and 212 to 254 (PFPG…LVYE). The span at 35 to 50 (EPACPEPLAQPELEAP) shows a compositional bias: low complexity. Positions 214–241 (PGSPLQPLPPSPSRNPQEQLPPCPPCSP) are enriched in pro residues. The span at 243–254 (APRRARKRLVYE) shows a compositional bias: basic residues.

The protein belongs to the PRR23 family.

The protein is Proline-rich protein 23A3 of Mus musculus (Mouse).